Here is a 320-residue protein sequence, read N- to C-terminus: L-lactate dehydrogenase A (320 aa).

Substrate-binding residues include Arg88, Asn120, and Arg151. Asn120 contributes to the NAD(+) binding site. His175 (proton acceptor) is an active-site residue.

The protein belongs to the LDH/MDH superfamily. LDH family. Homotetramer.

Its subcellular location is the cytoplasm. The enzyme catalyses (S)-lactate + NAD(+) = pyruvate + NADH + H(+). Its pathway is fermentation; pyruvate fermentation to lactate; (S)-lactate from pyruvate: step 1/1. In terms of biological role, converts pyruvate to lactate. The sequence is that of L-lactate dehydrogenase A (LDHA) from Rhizopus oryzae (Mucormycosis agent).